Here is a 79-residue protein sequence, read N- to C-terminus: UPF0154 protein Lm4b_01315 (79 aa).

The chain crosses the membrane as a helical span at residues 2 to 22 (WIYILVGIICLLAGLAGGFFI). Positions 57-66 (KINQMMSAMN) are enriched in polar residues. The segment at 57 to 79 (KINQMMSAMNKQQEKEKPKKTKK) is disordered.

It belongs to the UPF0154 family.

The protein localises to the cell membrane. The protein is UPF0154 protein Lm4b_01315 of Listeria monocytogenes serotype 4b (strain CLIP80459).